A 228-amino-acid polypeptide reads, in one-letter code: 7-cyano-7-deazaguanine synthase (228 aa).

11–21 (LSGGLDSATCL) is an ATP binding site. Zn(2+) is bound by residues C191, C201, C204, and C207.

Belongs to the QueC family. Zn(2+) serves as cofactor.

It catalyses the reaction 7-carboxy-7-deazaguanine + NH4(+) + ATP = 7-cyano-7-deazaguanine + ADP + phosphate + H2O + H(+). It participates in purine metabolism; 7-cyano-7-deazaguanine biosynthesis. Functionally, catalyzes the ATP-dependent conversion of 7-carboxy-7-deazaguanine (CDG) to 7-cyano-7-deazaguanine (preQ(0)). The protein is 7-cyano-7-deazaguanine synthase of Azoarcus sp. (strain BH72).